Consider the following 164-residue polypeptide: ATP synthase subunit b 2 (164 aa).

The chain crosses the membrane as a helical span at residues 4–24 (TFWAFVGLVLFLALLVYFQIP).

The protein belongs to the ATPase B chain family. F-type ATPases have 2 components, F(1) - the catalytic core - and F(0) - the membrane proton channel. F(1) has five subunits: alpha(3), beta(3), gamma(1), delta(1), epsilon(1). F(0) has three main subunits: a(1), b(2) and c(10-14). The alpha and beta chains form an alternating ring which encloses part of the gamma chain. F(1) is attached to F(0) by a central stalk formed by the gamma and epsilon chains, while a peripheral stalk is formed by the delta and b chains.

Its subcellular location is the cell inner membrane. F(1)F(0) ATP synthase produces ATP from ADP in the presence of a proton or sodium gradient. F-type ATPases consist of two structural domains, F(1) containing the extramembraneous catalytic core and F(0) containing the membrane proton channel, linked together by a central stalk and a peripheral stalk. During catalysis, ATP synthesis in the catalytic domain of F(1) is coupled via a rotary mechanism of the central stalk subunits to proton translocation. Its function is as follows. Component of the F(0) channel, it forms part of the peripheral stalk, linking F(1) to F(0). In Bartonella tribocorum (strain CIP 105476 / IBS 506), this protein is ATP synthase subunit b 2.